We begin with the raw amino-acid sequence, 378 residues long: Lipoyl synthase, mitochondrial (378 aa).

[4Fe-4S] cluster is bound by residues cysteine 97, cysteine 102, cysteine 108, cysteine 128, cysteine 132, cysteine 135, and serine 343. The Radical SAM core domain maps to 111-332 (GSDKSAATAT…RQRALDMGFL (222 aa)).

The protein belongs to the radical SAM superfamily. Lipoyl synthase family. [4Fe-4S] cluster serves as cofactor.

It localises to the mitochondrion. The enzyme catalyses [[Fe-S] cluster scaffold protein carrying a second [4Fe-4S](2+) cluster] + N(6)-octanoyl-L-lysyl-[protein] + 2 oxidized [2Fe-2S]-[ferredoxin] + 2 S-adenosyl-L-methionine + 4 H(+) = [[Fe-S] cluster scaffold protein] + N(6)-[(R)-dihydrolipoyl]-L-lysyl-[protein] + 4 Fe(3+) + 2 hydrogen sulfide + 2 5'-deoxyadenosine + 2 L-methionine + 2 reduced [2Fe-2S]-[ferredoxin]. It functions in the pathway protein modification; protein lipoylation via endogenous pathway; protein N(6)-(lipoyl)lysine from octanoyl-[acyl-carrier-protein]: step 2/2. In terms of biological role, catalyzes the radical-mediated insertion of two sulfur atoms into the C-6 and C-8 positions of the octanoyl moiety bound to the lipoyl domains of lipoate-dependent enzymes, thereby converting the octanoylated domains into lipoylated derivatives. The protein is Lipoyl synthase, mitochondrial of Phaeosphaeria nodorum (strain SN15 / ATCC MYA-4574 / FGSC 10173) (Glume blotch fungus).